A 398-amino-acid chain; its full sequence is MTTSTGFDNNAYNLPALRLSDVPNPAQTRVVVGMSGGVDSSVSAVLLQQAGFQVEGLFMKNWEEDDGTEYCTAMEDLADAQAVCDKIGINLHTANFAMEYWDRVFEHFLAEYQAGRTPNPDILCNKEIKFKAFLDYAVTLGADYIATGHYTRRSVNYTREDGLEVAHLMRGLDNNKDQSYFLHAVGGDKIAKTLFPVGELEKPEVRRIAEEHDLITAKKKDSTGICFIGERRFKDFLQQYLPAKPGNIVTDDGITIGKHDGLMYYTLGQRGGIGIGGVKDRPEEPWFVLQKDLSNNELIVGQGHDHPMLLSQRLTAYKLDWVERIAPAAIFSEQGLKCMAKTRYRQPDQSCTVFADSDDGSRVKVIFDEPQRAVTPGQSAVFYIGEVCLGGGVIESFE.

ATP is bound by residues 33 to 40 (GMSGGVDS) and Met59. The tract at residues 119–121 (NPD) is interaction with target base in tRNA. Cys124 functions as the Nucleophile in the catalytic mechanism. The cysteines at positions 124 and 226 are disulfide-linked. Residue Gly148 participates in ATP binding. The tract at residues 176–178 (KDQ) is interaction with tRNA. The active-site Cysteine persulfide intermediate is Cys226. Residues 343–344 (RY) are interaction with tRNA.

This sequence belongs to the MnmA/TRMU family.

The protein localises to the cytoplasm. The enzyme catalyses S-sulfanyl-L-cysteinyl-[protein] + uridine(34) in tRNA + AH2 + ATP = 2-thiouridine(34) in tRNA + L-cysteinyl-[protein] + A + AMP + diphosphate + H(+). Functionally, catalyzes the 2-thiolation of uridine at the wobble position (U34) of tRNA, leading to the formation of s(2)U34. This is tRNA-specific 2-thiouridylase MnmA from Psychrobacter sp. (strain PRwf-1).